The sequence spans 793 residues: Cation channel sperm-associated auxiliary subunit delta (793 aa).

The first 20 residues, 1-20 (MLMLMLVAAVTMWLRPLVTA), serve as a signal peptide directing secretion. Over 21 to 725 (QPLCRARTVR…AFPVQLVSAG (705 aa)) the chain is Extracellular. Intrachain disulfides connect Cys24–Cys370, Cys60–Cys146, Cys145–Cys153, Cys388–Cys497, Cys511–Cys703, Cys526–Cys573, and Cys625–Cys653. Asn128 carries N-linked (GlcNAc...) asparagine glycosylation. 5 N-linked (GlcNAc...) asparagine glycosylation sites follow: Asn231, Asn241, Asn473, Asn539, and Asn631. A helical membrane pass occupies residues 726-747 (VVMVLLISSILGSVWLAYMIPR). Over 748 to 793 (LLRTARGRRMTSFVAQLYGRCKTVCQFRASATARTGSKPMGRHRSS) the chain is Cytoplasmic.

Belongs to the CATSPERD family. In terms of assembly, component of the CatSper complex or CatSpermasome composed of the core pore-forming members CATSPER1, CATSPER2, CATSPER3 and CATSPER4 as well as auxiliary members CATSPERB, CATSPERG, CATSPERD, CATSPERE, CATSPERZ, C2CD6/CATSPERT, TMEM249, TMEM262 and EFCAB9. HSPA1 may be an additional auxiliary complex member. The core complex members CATSPER1, CATSPER2, CATSPER3 and CATSPER4 form a heterotetrameric channel. The auxiliary CATSPERB, CATSPERG, CATSPERD and CATSPERE subunits form a pavilion-like structure over the pore which stabilizes the complex through interactions with CATSPER4, CATSPER3, CATSPER1 and CATSPER2 respectively. TMEM262/CATSPERH interacts with CATSPERB, further stabilizing the complex. C2CD6/CATSPERT interacts at least with CATSPERD and is required for targeting the CatSper complex in the flagellar membrane.

The protein resides in the cell projection. It localises to the cilium. Its subcellular location is the flagellum membrane. Functionally, auxiliary component of the CatSper complex, a complex involved in sperm cell hyperactivation. Sperm cell hyperactivation is needed for sperm motility which is essential late in the preparation of sperm for fertilization. Required for CATSPER1 stability before intraflagellar transport and/or incorporation of the CatSper complex channel into the flagellar membrane. The sequence is that of Cation channel sperm-associated auxiliary subunit delta from Macaca fascicularis (Crab-eating macaque).